Here is a 379-residue protein sequence, read N- to C-terminus: 8-amino-7-oxononanoate synthase (379 aa).

Positions 27 and 34 each coordinate substrate. Position 114–115 (glycine 114–tyrosine 115) interacts with pyridoxal 5'-phosphate. Residue histidine 139 coordinates substrate. Pyridoxal 5'-phosphate contacts are provided by residues serine 187, aspartate 212–histidine 215, and threonine 232–lysine 235. Lysine 235 is modified (N6-(pyridoxal phosphate)lysine). Position 344 (threonine 344) interacts with substrate.

The protein belongs to the class-II pyridoxal-phosphate-dependent aminotransferase family. BioF subfamily. As to quaternary structure, homodimer. The cofactor is pyridoxal 5'-phosphate.

The catalysed reaction is 6-carboxyhexanoyl-[ACP] + L-alanine + H(+) = (8S)-8-amino-7-oxononanoate + holo-[ACP] + CO2. Its pathway is cofactor biosynthesis; biotin biosynthesis. In terms of biological role, catalyzes the decarboxylative condensation of pimeloyl-[acyl-carrier protein] and L-alanine to produce 8-amino-7-oxononanoate (AON), [acyl-carrier protein], and carbon dioxide. The chain is 8-amino-7-oxononanoate synthase from Methylobacterium nodulans (strain LMG 21967 / CNCM I-2342 / ORS 2060).